The following is a 456-amino-acid chain: Signal recognition particle receptor FtsY (456 aa).

Over residues 1-26 (MFDGLKKKLNRFRNDVEETAEEKAEA) the composition is skewed to basic and acidic residues. Residues 1-163 (MFDGLKKKLN…DEDDSSGPGR (163 aa)) form a disordered region. The span at 27–39 (AADEAESDADAEA) shows a compositional bias: acidic residues. Low complexity predominate over residues 40–62 (ESAPADTDNAAVEPEASEPAAAD). The span at 63-81 (PDADAVGDADAGSEADAVD) shows a compositional bias: acidic residues. The span at 82–97 (AADAPADAESSSAAVE) shows a compositional bias: low complexity. Residues 112–134 (PDSEVDAGADTGDEPSGEPTADE) are compositionally biased toward acidic residues. Residues 265-272 (GINGVGKT), 347-351 (DTAGR), and 405-408 (TKAD) contribute to the GTP site.

It belongs to the GTP-binding SRP family. FtsY subfamily. In terms of assembly, part of the signal recognition particle protein translocation system, which is composed of SRP and FtsY.

Its subcellular location is the cell membrane. The protein localises to the cytoplasm. The catalysed reaction is GTP + H2O = GDP + phosphate + H(+). In terms of biological role, involved in targeting and insertion of nascent membrane proteins into the cytoplasmic membrane. Acts as a receptor for the complex formed by the signal recognition particle (SRP) and the ribosome-nascent chain (RNC). The protein is Signal recognition particle receptor FtsY of Haloferax volcanii (strain ATCC 29605 / DSM 3757 / JCM 8879 / NBRC 14742 / NCIMB 2012 / VKM B-1768 / DS2) (Halobacterium volcanii).